We begin with the raw amino-acid sequence, 280 residues long: Type 1 encapsulin shell protein (280 aa).

Belongs to the encapsulin family. Family 1 subfamily. As to quaternary structure, this encapsulin nanocompartment is formed by 60 subunits; monomers form pentamers which assemble to form shells. There are 12 pores where the pentamers meet as well as 3-fold axis channels and dimer channels; none are larger than 3-4 Angstroms in diameter. The N-terminus of the protein is inside the shell, the C-terminus is outside.

It is found in the encapsulin nanocompartment. Shell component of a type 1 encapsulin nanocompartment. Assembles into proteinaceous icosahedral shells 24 nm in diameter in the presence and absence of its ferritin cargo protein. The center of cargo-loaded nanocompartments is loaded with iron. The empty encapsulin nanocompartment sequesters about 2200 Fe ions while the cargo-loaded nanocompartment can maximally sequester about 4150 Fe ions. Does not have any detectable ferroxidase activity. The chain is Type 1 encapsulin shell protein from Rhodospirillum rubrum (strain ATCC 11170 / ATH 1.1.1 / DSM 467 / LMG 4362 / NCIMB 8255 / S1).